Consider the following 257-residue polypeptide: UPF0246 protein BAV2675 (257 aa).

It belongs to the UPF0246 family.

This is UPF0246 protein BAV2675 from Bordetella avium (strain 197N).